The chain runs to 50 residues: Large ribosomal subunit protein eL39 (50 aa).

Residues 1-12 (MGKKSKAKKKRL) are compositionally biased toward basic residues. The interval 1–21 (MGKKSKAKKKRLGKLEKQNSR) is disordered.

Belongs to the eukaryotic ribosomal protein eL39 family.

The sequence is that of Large ribosomal subunit protein eL39 from Haloquadratum walsbyi (strain DSM 16790 / HBSQ001).